The primary structure comprises 371 residues: Epoxyqueuosine reductase (371 aa).

Residue Asp137 is the Proton donor of the active site. The 33-residue stretch at 179–211 folds into the 4Fe-4S ferredoxin-type domain; the sequence is IPLPVDTPVENQCGKCTACISSCPTNAILENGV. The [4Fe-4S] cluster site is built by Cys191, Cys194, Cys197, Cys201, Cys217, Cys244, Cys247, and Cys251.

It belongs to the QueG family. In terms of assembly, monomer. The cofactor is cob(II)alamin. [4Fe-4S] cluster is required as a cofactor.

It localises to the cytoplasm. The enzyme catalyses epoxyqueuosine(34) in tRNA + AH2 = queuosine(34) in tRNA + A + H2O. Its pathway is tRNA modification; tRNA-queuosine biosynthesis. Catalyzes the conversion of epoxyqueuosine (oQ) to queuosine (Q), which is a hypermodified base found in the wobble positions of tRNA(Asp), tRNA(Asn), tRNA(His) and tRNA(Tyr). This chain is Epoxyqueuosine reductase, found in Aliivibrio fischeri (strain ATCC 700601 / ES114) (Vibrio fischeri).